The chain runs to 192 residues: GTP cyclohydrolase 1 (192 aa).

Cys82, His85, and Cys153 together coordinate Zn(2+).

Belongs to the GTP cyclohydrolase I family. Toroid-shaped homodecamer, composed of two pentamers of five dimers.

It carries out the reaction GTP + H2O = 7,8-dihydroneopterin 3'-triphosphate + formate + H(+). It participates in cofactor biosynthesis; 7,8-dihydroneopterin triphosphate biosynthesis; 7,8-dihydroneopterin triphosphate from GTP: step 1/1. This is GTP cyclohydrolase 1 from Rickettsia bellii (strain OSU 85-389).